Consider the following 196-residue polypeptide: ATP-dependent Clp protease proteolytic subunit (196 aa).

Ser-98 serves as the catalytic Nucleophile. The active site involves His-123.

It belongs to the peptidase S14 family. As to quaternary structure, fourteen ClpP subunits assemble into 2 heptameric rings which stack back to back to give a disk-like structure with a central cavity, resembling the structure of eukaryotic proteasomes.

It localises to the cytoplasm. The enzyme catalyses Hydrolysis of proteins to small peptides in the presence of ATP and magnesium. alpha-casein is the usual test substrate. In the absence of ATP, only oligopeptides shorter than five residues are hydrolyzed (such as succinyl-Leu-Tyr-|-NHMec, and Leu-Tyr-Leu-|-Tyr-Trp, in which cleavage of the -Tyr-|-Leu- and -Tyr-|-Trp bonds also occurs).. In terms of biological role, cleaves peptides in various proteins in a process that requires ATP hydrolysis. Has a chymotrypsin-like activity. Plays a major role in the degradation of misfolded proteins. The polypeptide is ATP-dependent Clp protease proteolytic subunit (Sulfurimonas denitrificans (strain ATCC 33889 / DSM 1251) (Thiomicrospira denitrificans (strain ATCC 33889 / DSM 1251))).